Here is a 72-residue protein sequence, read N- to C-terminus: Translation initiation factor IF-1 (72 aa).

The S1-like domain occupies 2-72; it reads AKEDVIEVEG…TRGRITYRYK (71 aa). The residue at position 60 (Tyr-60) is a Phosphotyrosine.

The protein belongs to the IF-1 family. As to quaternary structure, component of the 30S ribosomal translation pre-initiation complex which assembles on the 30S ribosome in the order IF-2 and IF-3, IF-1 and N-formylmethionyl-tRNA(fMet); mRNA recruitment can occur at any time during PIC assembly.

The protein resides in the cytoplasm. In terms of biological role, one of the essential components for the initiation of protein synthesis. Stabilizes the binding of IF-2 and IF-3 on the 30S subunit to which N-formylmethionyl-tRNA(fMet) subsequently binds. Helps modulate mRNA selection, yielding the 30S pre-initiation complex (PIC). Upon addition of the 50S ribosomal subunit IF-1, IF-2 and IF-3 are released leaving the mature 70S translation initiation complex. The protein is Translation initiation factor IF-1 of Halalkalibacterium halodurans (strain ATCC BAA-125 / DSM 18197 / FERM 7344 / JCM 9153 / C-125) (Bacillus halodurans).